A 214-amino-acid chain; its full sequence is Thymidylate kinase (214 aa).

ATP is bound at residue 9–16; that stretch reads GIEGCGKT.

Belongs to the thymidylate kinase family.

It catalyses the reaction dTMP + ATP = dTDP + ADP. Its function is as follows. Phosphorylation of dTMP to form dTDP in both de novo and salvage pathways of dTTP synthesis. The polypeptide is Thymidylate kinase (Geotalea daltonii (strain DSM 22248 / JCM 15807 / FRC-32) (Geobacter daltonii)).